Reading from the N-terminus, the 266-residue chain is Phage-like element PBSX protein XkdC (266 aa).

124-131 (GQPGSGKT) is a binding site for ATP.

To B.subtilis YqaM.

May function as a transcriptional antiterminator. This is Phage-like element PBSX protein XkdC (xkdC) from Bacillus subtilis (strain 168).